We begin with the raw amino-acid sequence, 411 residues long: Putative competence-damage inducible protein (411 aa).

It belongs to the CinA family.

The polypeptide is Putative competence-damage inducible protein (Desulforamulus reducens (strain ATCC BAA-1160 / DSM 100696 / MI-1) (Desulfotomaculum reducens)).